Consider the following 129-residue polypeptide: Small ribosomal subunit protein uS11 (129 aa).

The protein belongs to the universal ribosomal protein uS11 family. In terms of assembly, part of the 30S ribosomal subunit. Interacts with proteins S7 and S18. Binds to IF-3.

Located on the platform of the 30S subunit, it bridges several disparate RNA helices of the 16S rRNA. Forms part of the Shine-Dalgarno cleft in the 70S ribosome. This Hamiltonella defensa subsp. Acyrthosiphon pisum (strain 5AT) protein is Small ribosomal subunit protein uS11.